We begin with the raw amino-acid sequence, 374 residues long: tRNA-specific 2-thiouridylase MnmA (374 aa).

ATP contacts are provided by residues 12-19 and Met38; that span reads GMSGGVDS. The segment at 98–100 is interaction with target base in tRNA; that stretch reads NPD. The Nucleophile role is filled by Cys103. Cys103 and Cys207 are joined by a disulfide. ATP is bound at residue Gly128. An interaction with tRNA region spans residues 157–159; sequence KDQ. The Cysteine persulfide intermediate role is filled by Cys207. Residues 321–322 are interaction with tRNA; it reads RY.

It belongs to the MnmA/TRMU family.

Its subcellular location is the cytoplasm. The catalysed reaction is S-sulfanyl-L-cysteinyl-[protein] + uridine(34) in tRNA + AH2 + ATP = 2-thiouridine(34) in tRNA + L-cysteinyl-[protein] + A + AMP + diphosphate + H(+). Catalyzes the 2-thiolation of uridine at the wobble position (U34) of tRNA, leading to the formation of s(2)U34. The sequence is that of tRNA-specific 2-thiouridylase MnmA from Aliivibrio fischeri (strain MJ11) (Vibrio fischeri).